The primary structure comprises 427 residues: Phosphoribosylamine--glycine ligase (427 aa).

Residues 109–313 enclose the ATP-grasp domain; sequence RNLMAEYKIE…LAEVVTGITE (205 aa). 136-191 is an ATP binding site; sequence VRDHDGDLAVKPIGLTGGKGVRIMGEQVDRAGAIEYIREINGGVVLEERLTGEEFT. Residues glutamine 271, glutamate 283, and asparagine 285 each contribute to the Mg(2+) site. Residues glutamine 271, glutamate 283, and asparagine 285 each contribute to the Mn(2+) site.

Belongs to the GARS family. Requires Mg(2+) as cofactor. It depends on Mn(2+) as a cofactor.

The catalysed reaction is 5-phospho-beta-D-ribosylamine + glycine + ATP = N(1)-(5-phospho-beta-D-ribosyl)glycinamide + ADP + phosphate + H(+). The protein operates within purine metabolism; IMP biosynthesis via de novo pathway; N(1)-(5-phospho-D-ribosyl)glycinamide from 5-phospho-alpha-D-ribose 1-diphosphate: step 2/2. The protein is Phosphoribosylamine--glycine ligase of Methanoregula boonei (strain DSM 21154 / JCM 14090 / 6A8).